Reading from the N-terminus, the 239-residue chain is RBPJ-interacting and tubulin-associated protein 1 (239 aa).

Residues 12 to 24 (LDLSITGHSTALP) carry the Nuclear export signal motif. Disordered regions lie at residues 62–97 (APPS…TPRK) and 149–239 (LVQQ…PPWK). Positions 93–109 (GTPRKKIQYRVKSRTPS) match the Nuclear localization signal motif. Positions 129-158 (WVKKEDTVKIRPLLWSPSPRLVQQSSMQNA) are interaction with RBPJ/RBPSUH. Composition is skewed to polar residues over residues 149-159 (LVQQSSMQNAK) and 203-221 (RQRQ…SCSG). Residues 158–239 (AKQGPLRAVH…VKMQERPPWK (82 aa)) are interaction with tubulin.

It belongs to the RITA family. In terms of assembly, interacts with rbpj/rbpsuh.

The protein resides in the cytoplasm. The protein localises to the nucleus. Its function is as follows. Tubulin-binding protein that acts as a negative regulator of Notch signaling pathway. Shuttles between the cytoplasm and the nucleus and mediates the nuclear export of rbpj/rbpsuh, thereby preventing the interaction between rbpj/rbpsuh and NICD product of Notch proteins (Notch intracellular domain), leading to down-regulate Notch-mediated transcription. May play a role in neurogenesis. The sequence is that of RBPJ-interacting and tubulin-associated protein 1 (rita1) from Xenopus laevis (African clawed frog).